A 104-amino-acid polypeptide reads, in one-letter code: Large ribosomal subunit protein eL30 (104 aa).

This sequence belongs to the eukaryotic ribosomal protein eL30 family.

The sequence is that of Large ribosomal subunit protein eL30 (RPL30) from Tetrahymena thermophila (strain SB210).